Consider the following 220-residue polypeptide: Ribosomal RNA small subunit methyltransferase G (220 aa).

Residues Gly78, Phe83, 129–130 (GE), and Arg146 contribute to the S-adenosyl-L-methionine site.

Belongs to the methyltransferase superfamily. RNA methyltransferase RsmG family.

The protein localises to the cytoplasm. It carries out the reaction guanosine(527) in 16S rRNA + S-adenosyl-L-methionine = N(7)-methylguanosine(527) in 16S rRNA + S-adenosyl-L-homocysteine. Specifically methylates the N7 position of guanine in position 527 of 16S rRNA. In Geobacter metallireducens (strain ATCC 53774 / DSM 7210 / GS-15), this protein is Ribosomal RNA small subunit methyltransferase G.